Reading from the N-terminus, the 197-residue chain is MFEYPQGYELIAGVDEVGRGPLVGAVVTAAVILDPNNPIEGLADSKKLSEKKRLALADEIKEKALAWALGRAEANEIDEINILQASLLAMTRAVKSLKIQPHFVLVDGNKIPKDLAIPAQAVVKGDSIVAEISAASILAKVARDQEMEELDKQYPEYAFAQHKGYPTKLHLEKLAEFGALPQHRRSFAPVKKALEQF.

In terms of domain architecture, RNase H type-2 spans 9 to 197 (ELIAGVDEVG…APVKKALEQF (189 aa)). A divalent metal cation contacts are provided by D15, E16, and D107.

Belongs to the RNase HII family. Mn(2+) serves as cofactor. Mg(2+) is required as a cofactor.

The protein localises to the cytoplasm. The catalysed reaction is Endonucleolytic cleavage to 5'-phosphomonoester.. Its function is as follows. Endonuclease that specifically degrades the RNA of RNA-DNA hybrids. In Haemophilus influenzae (strain PittGG), this protein is Ribonuclease HII.